A 587-amino-acid polypeptide reads, in one-letter code: L-ornithine N(5)-monooxygenase (587 aa).

FAD contacts are provided by residues 53–61 (EKHTSFQWH) and Gln-72. A substrate-binding site is contributed by Lys-77. 235-238 (GGQS) is a binding site for NADP(+). Substrate-binding positions include 282–285 (NEVF) and Asn-312. 312-314 (NYS) contacts NADP(+). Residues 488 to 511 (DNSAASGVSGASTPLTSPSEEEGK) are disordered. Over residues 491 to 505 (AASGVSGASTPLTSP) the composition is skewed to polar residues. FAD is bound at residue 567-569 (TLL). Ser-570 serves as a coordination point for substrate.

It belongs to the lysine N(6)-hydroxylase/L-ornithine N(5)-oxygenase family. Homotetramer. FAD is required as a cofactor.

The enzyme catalyses L-ornithine + NADPH + O2 = N(5)-hydroxy-L-ornithine + NADP(+) + H2O. It carries out the reaction L-ornithine + NADH + O2 = N(5)-hydroxy-L-ornithine + NAD(+) + H2O. Its pathway is siderophore biosynthesis; ferrichrome biosynthesis. In terms of biological role, L-ornithine N(5)-monooxygenase; part of the siderophore biosynthetic pathway. Omphalotus olearius produces ferrichrome A, but no other siderophore has been detected. Ferrichrome A consists of a hexapeptide ring made up of one glycine, two serine, and three N(5)-hydroxyornithine amino acid residues, the latter acylated by trans-(alpha-methyl)-glutaconic acid residues. The biosynthesis of ferrichrome A depends on the hydroxylation of ornithine to N(5)-hydroxyornithine, catalyzed by the monooxygenase omo1. The second step, the acylation of N(5)-hydroxy-L-ornithine is probably catalyzed by the N-acyltransferase ato1. Finally, assembly of ferrichrome A is catalyzed by the nonribosomal peptide synthase (NRPS) fso1. This is L-ornithine N(5)-monooxygenase from Omphalotus olearius (Jack o'lantern).